The sequence spans 168 residues: Protein-export protein SecB (168 aa).

Positions 1–20 (MTDETAANGENEAGRQSQSS) are disordered.

The protein belongs to the SecB family. Homotetramer, a dimer of dimers. One homotetramer interacts with 1 SecA dimer.

It localises to the cytoplasm. Functionally, one of the proteins required for the normal export of preproteins out of the cell cytoplasm. It is a molecular chaperone that binds to a subset of precursor proteins, maintaining them in a translocation-competent state. It also specifically binds to its receptor SecA. The chain is Protein-export protein SecB from Rhodospirillum centenum (strain ATCC 51521 / SW).